The chain runs to 230 residues: LexA repressor (230 aa).

Positions 28 to 48 form a DNA-binding region, H-T-H motif; it reads LREIGAHMGIRSTNGVNDHLR. Catalysis depends on for autocatalytic cleavage activity residues serine 149 and lysine 186.

This sequence belongs to the peptidase S24 family. Homodimer.

The catalysed reaction is Hydrolysis of Ala-|-Gly bond in repressor LexA.. In terms of biological role, represses a number of genes involved in the response to DNA damage (SOS response), including recA and lexA. In the presence of single-stranded DNA, RecA interacts with LexA causing an autocatalytic cleavage which disrupts the DNA-binding part of LexA, leading to derepression of the SOS regulon and eventually DNA repair. The chain is LexA repressor from Sorangium cellulosum (strain So ce56) (Polyangium cellulosum (strain So ce56)).